The sequence spans 160 residues: Transmembrane protein 216 (160 aa).

4 helical membrane-spanning segments follow: residues 41–61 (WYFAAFFVAEILMFIYKGVIL), 68–88 (LILDVVLLLLFSGLETLRLFY), 101–121 (LFVSVAILVPCAVLSVYYLLL), and 134–154 (AVLLCFYGFELVLGVMTISIF).

Part of the tectonic-like complex (also named B9 complex).

The protein localises to the membrane. The protein resides in the cytoplasm. It is found in the cytoskeleton. Its subcellular location is the cilium basal body. Part of the tectonic-like complex which is required for tissue-specific ciliogenesis and may regulate ciliary membrane composition. The protein is Transmembrane protein 216 (tmem216) of Danio rerio (Zebrafish).